Consider the following 479-residue polypeptide: Mannose-1-phosphate guanylyltransferase RfbM (479 aa).

It belongs to the mannose-6-phosphate isomerase type 2 family. In terms of assembly, homodimer.

The enzyme catalyses alpha-D-mannose 1-phosphate + GTP + H(+) = GDP-alpha-D-mannose + diphosphate. It functions in the pathway nucleotide-sugar biosynthesis; GDP-alpha-D-mannose biosynthesis; GDP-alpha-D-mannose from alpha-D-mannose 1-phosphate (GTP route): step 1/1. It participates in bacterial outer membrane biogenesis; LPS O-antigen biosynthesis. Functionally, involved in GDP-mannose biosynthesis which serves as the activated sugar nucleotide precursor for mannose residues in cell surface polysaccharides. This enzyme participates in synthesis of the LPS group B O antigen. The protein is Mannose-1-phosphate guanylyltransferase RfbM (rfbM) of Salmonella typhimurium (strain LT2 / SGSC1412 / ATCC 700720).